The primary structure comprises 101 residues: DET1- and DDB1-associated protein 1 (101 aa).

Residues 67 to 101 (NAAKKRDQDQLEIGETSAPPRKIARTDSQEMSEDT) form a disordered region.

Belongs to the DDA1 family. In terms of assembly, component of numerous DCX (DDB1-CUL4-X-box) E3 ubiquitin-protein ligase complexes which consist of a core of DDB1, cullin-4 (CUL4A or CUL4B), DDA1 and RBX1.

The protein operates within protein modification; protein ubiquitination. Functions as a component of numerous distinct DCX (DDB1-CUL4-X-box) E3 ubiquitin-protein ligase complexes which mediate the ubiquitination and subsequent proteasomal degradation of target proteins. In the DCX complexes, acts as a scaffolding subunit required to stabilize the complex. This Xenopus tropicalis (Western clawed frog) protein is DET1- and DDB1-associated protein 1.